A 248-amino-acid polypeptide reads, in one-letter code: Cytochrome c oxidase subunit 2 (248 aa).

The Mitochondrial intermembrane segment spans residues Met-1–Tyr-36. Residues Leu-37–Ile-57 form a helical membrane-spanning segment. Residues Glu-58–Ser-75 are Mitochondrial matrix-facing. The chain crosses the membrane as a helical span at residues Ile-76–Leu-100. Residues Tyr-101–Ser-248 are Mitochondrial intermembrane-facing. Cu cation contacts are provided by His-182, Cys-217, Glu-219, Cys-221, His-225, and Met-228. Mg(2+) is bound at residue Glu-219.

It belongs to the cytochrome c oxidase subunit 2 family. Component of the cytochrome c oxidase (complex IV, CIV), a multisubunit enzyme composed of a catalytic core of 3 subunits and several supernumerary subunits. The complex exists as a monomer or a dimer and forms supercomplexes (SCs) in the inner mitochondrial membrane with ubiquinol-cytochrome c oxidoreductase (cytochrome b-c1 complex, complex III, CIII). Cu cation is required as a cofactor.

The protein localises to the mitochondrion inner membrane. The enzyme catalyses 4 Fe(II)-[cytochrome c] + O2 + 8 H(+)(in) = 4 Fe(III)-[cytochrome c] + 2 H2O + 4 H(+)(out). Component of the cytochrome c oxidase, the last enzyme in the mitochondrial electron transport chain which drives oxidative phosphorylation. The respiratory chain contains 3 multisubunit complexes succinate dehydrogenase (complex II, CII), ubiquinol-cytochrome c oxidoreductase (cytochrome b-c1 complex, complex III, CIII) and cytochrome c oxidase (complex IV, CIV), that cooperate to transfer electrons derived from NADH and succinate to molecular oxygen, creating an electrochemical gradient over the inner membrane that drives transmembrane transport and the ATP synthase. Cytochrome c oxidase is the component of the respiratory chain that catalyzes the reduction of oxygen to water. Electrons originating from reduced cytochrome c in the intermembrane space (IMS) are transferred via the dinuclear copper A center (CU(A)) of subunit 2 and heme A of subunit 1 to the active site in subunit 1, a binuclear center (BNC) formed by heme A3 and copper B (CU(B)). The BNC reduces molecular oxygen to 2 water molecules using 4 electrons from cytochrome c in the IMS and 4 protons from the mitochondrial matrix. In Schizosaccharomyces pombe (strain 972 / ATCC 24843) (Fission yeast), this protein is Cytochrome c oxidase subunit 2 (cox2).